The chain runs to 213 residues: RPW8-like protein 3 (213 aa).

The 153-residue stretch at 1-153 folds into the RPW8 domain; sequence MPVSEIMAGA…ITRQPTDCIC (153 aa). Residues 7 to 23 traverse the membrane as a helical segment; sequence MAGAALGLALQVLHDAI. 2 coiled-coil regions span residues 70-93 and 125-147; these read EDLKHLLEKAVSLVEAYAELRRRN and VDIKELMAKMSEMNTKLDEITRQ. Residue N157 is glycosylated (N-linked (GlcNAc...) asparagine).

The protein belongs to the plant RPW8 protein family.

The protein resides in the membrane. Probable disease resistance (R) protein. This is RPW8-like protein 3 from Arabidopsis thaliana (Mouse-ear cress).